A 51-amino-acid chain; its full sequence is U-Asilidin(1)-Eru1a (51 aa).

Residues 1–23 form the signal peptide; sequence MANYIDVLSFLAIICATVLATLA. Intrachain disulfides connect C26–C40, C33–C44, and C39–C49.

The protein belongs to the asilidin-1 family. As to expression, expressed by the venom gland. The most highly expressed peptides U-Asilidin1-Mar1a is around 3000 times higher expressed in the venom thoracic glands compared to its body tissues.

Its subcellular location is the secreted. In terms of biological role, induces neurotoxic effect on honeybees, including slow movements, disorientation and paralysis. Since it provokes similar symptoms than omega-atracotoxin, it is probable that it acts in the same way by inhibiting voltage-gated calcium channels. This is U-Asilidin(1)-Eru1a from Eutolmus rufibarbis (Golden-tabbed robberfly).